Here is a 1469-residue protein sequence, read N- to C-terminus: ATP-binding cassette transporter abc4 (1469 aa).

8 consecutive transmembrane segments (helical) span residues 21–40 (SLYYSLSDFSLSAISIFPTH), 55–74 (YSLESGLVCLYLYLIYRWIT), 94–114 (HGILLWLLSILFLGMTAFMFV), 121–141 (AFSDPPVKICLLAYSVHLFLL), 160–180 (VLLNLLLLPPIFHFYSYPFFF), 189–209 (YSPFLWFYFFITIVGNFIPLF), 296–316 (ILGMGVSSFMVSVCQFLSPIA), and 337–357 (WIVLLLTGPFLTSLFTQFYLF). The region spanning 296-580 (ILGMGVSSFM…IAYLMRQIVQ (285 aa)) is the ABC transmembrane type-1 1 domain. N386 carries an N-linked (GlcNAc...) asparagine glycan. A run of 2 helical transmembrane segments spans residues 412–432 (EFIHIIVRAPVEIAGSIYLLQ) and 441–461 (VGLALTVLTCSVPIVLGPLVA). N-linked (GlcNAc...) asparagine glycosylation occurs at N510. Helical transmembrane passes span 524–544 (VLVESLPVFSMFATFVVFTTI) and 553–573 (IAFTSISLFSFIRTQFSWIAY). Residues 611–840 (IGFFNASLTW…LAEQAASASE (230 aa)) form the ABC transporter 1 domain. A glycan (N-linked (GlcNAc...) asparagine) is linked at N615. 648–655 (GPTGSGKS) is a binding site for ATP. N-linked (GlcNAc...) asparagine glycans are attached at residues N691, N790, and N815. A helical transmembrane segment spans residues 894 to 914 (GFYVAAVLLFFVTTQATSILI). Residues 897–1176 (VAAVLLFFVT…FVRSCNSLQA (280 aa)) form the ABC transmembrane type-1 2 domain. The N-linked (GlcNAc...) asparagine glycan is linked to N923. The chain crosses the membrane as a helical span at residues 936–956 (FLFVYGTMLLAYSLLDFLRTV). N1007 carries N-linked (GlcNAc...) asparagine glycosylation. Helical transmembrane passes span 1009 to 1029 (SGWLFFSINCFLSVAGGILSV), 1033 to 1053 (MPIFMIPAVIVCLAGYYFGLL), 1065 to 1085 (ISIYTSPIFSLLGESIVGVSV), 1120 to 1140 (VAVRTDGISGLVGAIAGLIAL), and 1148 to 1168 (GVVGFSLNQAVIFSSSVLLFV). The region spanning 1214 to 1453 (FNHVSVSYSA…NGHFRRMCDG (240 aa)) is the ABC transporter 2 domain. Residue 1246–1253 (GRTGSGKS) coordinates ATP. Residue N1355 is glycosylated (N-linked (GlcNAc...) asparagine).

It belongs to the ABC transporter superfamily. ABCC family. Conjugate transporter (TC 3.A.1.208) subfamily.

The protein localises to the vacuole membrane. The catalysed reaction is ATP + H2O + xenobioticSide 1 = ADP + phosphate + xenobioticSide 2.. Functionally, involved in detoxification of xenobiotics, and vacuolar sequestration of glutathione S-conjugates. Together with abc2, required for accumulation of a red pigment (ade pigment) in the vacuole of a mutant affected in the adenine biosynthetic pathway. The polypeptide is ATP-binding cassette transporter abc4 (Schizosaccharomyces pombe (strain 972 / ATCC 24843) (Fission yeast)).